The chain runs to 120 residues: NAD(P)H-quinone oxidoreductase subunit 3, chloroplastic (120 aa).

The next 3 membrane-spanning stretches (helical) occupy residues 9-29 (IFWA…LISG), 64-84 (MFAL…PWAM), and 88-108 (VLGV…IVGS).

Belongs to the complex I subunit 3 family. As to quaternary structure, NDH is composed of at least 16 different subunits, 5 of which are encoded in the nucleus.

The protein localises to the plastid. It is found in the chloroplast thylakoid membrane. It carries out the reaction a plastoquinone + NADH + (n+1) H(+)(in) = a plastoquinol + NAD(+) + n H(+)(out). The enzyme catalyses a plastoquinone + NADPH + (n+1) H(+)(in) = a plastoquinol + NADP(+) + n H(+)(out). Its function is as follows. NDH shuttles electrons from NAD(P)H:plastoquinone, via FMN and iron-sulfur (Fe-S) centers, to quinones in the photosynthetic chain and possibly in a chloroplast respiratory chain. The immediate electron acceptor for the enzyme in this species is believed to be plastoquinone. Couples the redox reaction to proton translocation, and thus conserves the redox energy in a proton gradient. The protein is NAD(P)H-quinone oxidoreductase subunit 3, chloroplastic of Gossypium barbadense (Sea Island cotton).